The following is a 592-amino-acid chain: Glutathione-regulated potassium-efflux system protein KefB (592 aa).

Helical transmembrane passes span 4 to 24, 29 to 49, 55 to 75, 87 to 107, 115 to 135, 152 to 172, 177 to 197, 207 to 227, 230 to 250, 268 to 288, 291 to 311, 324 to 344, and 356 to 376; these read SDFL…VPLA, IGAV…GLGF, EILH…GLEL, IFGV…GLLM, AAVV…LQLM, VLLF…LLAG, HFDW…LIGG, FIAA…LVLG, LFMD…GVLL, GLLL…GVLY, LLWV…VLYL, MQFA…FSTA, and ALLL…MKLV. The RCK N-terminal domain occupies 400–519; the sequence is KPQVIVVGFG…AGVTQFSRET (120 aa).

This sequence belongs to the monovalent cation:proton antiporter 2 (CPA2) transporter (TC 2.A.37) family. KefB subfamily. Interacts with the regulatory subunit KefG.

It localises to the cell inner membrane. Its function is as follows. Pore-forming subunit of a potassium efflux system that confers protection against electrophiles. Catalyzes K(+)/H(+) antiport. The polypeptide is Glutathione-regulated potassium-efflux system protein KefB (Escherichia coli O157:H7).